Reading from the N-terminus, the 233-residue chain is 7-cyano-7-deazaguanine synthase (233 aa).

18–28 serves as a coordination point for ATP; that stretch reads FSGGQDSTTCL. Residues cysteine 198, cysteine 213, cysteine 216, and cysteine 219 each coordinate Zn(2+).

This sequence belongs to the QueC family. It depends on Zn(2+) as a cofactor.

It carries out the reaction 7-carboxy-7-deazaguanine + NH4(+) + ATP = 7-cyano-7-deazaguanine + ADP + phosphate + H2O + H(+). Its pathway is purine metabolism; 7-cyano-7-deazaguanine biosynthesis. Its function is as follows. Catalyzes the ATP-dependent conversion of 7-carboxy-7-deazaguanine (CDG) to 7-cyano-7-deazaguanine (preQ(0)). This Wolinella succinogenes (strain ATCC 29543 / DSM 1740 / CCUG 13145 / JCM 31913 / LMG 7466 / NCTC 11488 / FDC 602W) (Vibrio succinogenes) protein is 7-cyano-7-deazaguanine synthase.